Consider the following 883-residue polypeptide: Aldehyde-alcohol dehydrogenase (883 aa).

Residues 13–456 are aldehyde dehydrogenase; that stretch reads KLVAEKHVDE…DNVSAINLLN (444 aa). NAD(+) contacts are provided by residues 121-126, G206, and G224; that span reads ITPTTN. The active-site Nucleophile is C257. NAD(+)-binding positions include E355, L435, and 438–443; that span reads GSYGRN. The interval 457–464 is linker; the sequence is IKKVGRRR. NAD(+) is bound by residues D500, D534, 561-565, 612-613, V625, K634, and L653; these read GSPMD and TT. Fe cation-binding residues include D668, H672, H736, and H750.

It in the N-terminal section; belongs to the aldehyde dehydrogenase family. The protein in the C-terminal section; belongs to the iron-containing alcohol dehydrogenase family. It depends on Fe(2+) as a cofactor.

It carries out the reaction an aldehyde + NAD(+) + H2O = a carboxylate + NADH + 2 H(+). It catalyses the reaction ethanol + NAD(+) = acetaldehyde + NADH + H(+). In terms of biological role, has alcohol dehydrogenase activity. Has aldehyde dehydrogenase activity. Plays a role in enhancing virulence in mice, under ethanol stress conditions, perhaps by inducing expression of pneumolysin (Ply) and increasing production of hydrogen peroxide H(2)O(2). May be considered a potential virulence factor. This chain is Aldehyde-alcohol dehydrogenase, found in Streptococcus pneumoniae serotype 2 (strain D39 / NCTC 7466).